Consider the following 582-residue polypeptide: Isopropyl malate synthase AMT7 (582 aa).

The region spanning 61-341 (PVLFSTDLRD…EPGIDLSRLD (281 aa)) is the Pyruvate carboxyltransferase domain.

Belongs to the alpha-IPM synthase/homocitrate synthase family. LeuA type 2 subfamily.

It carries out the reaction 3-methyl-2-oxobutanoate + acetyl-CoA + H2O = (2S)-2-isopropylmalate + CoA + H(+). Its pathway is mycotoxin biosynthesis. Isopropyl malate synthase; part of the gene clusters that mediate the biosynthesis of AM-toxins, host-selective toxins (HSTs) causing Alternaria blotch on apple, a worldwide distributed disease. AM-toxins are cyclic depsipeptides containing the 3 residues 2-hydroxy-isovaleric acid (2-HIV), dehydroalanine, L-alanine which are common for all 3 AM-toxins I to III. The fourth precursor is L-alpha-amino-methoxyphenyl-valeric acid (L-Amv) for AM-toxin I, L-alpha-amino-phenyl-valeric acid (L-Apv) for AM-toxin II, and L-alpha-amino-hydroxyphenyl-valeric acid (L-Ahv) for AM-toxin III. AM-toxins have two target sites for affecting susceptible apple cells; they cause invagination of the plasma membrane and electrolyte loss and chloroplast disorganization. The non-ribosomal peptide synthetase AMT1 contains 4 catalytic modules and is responsible for activation of each residue in AM-toxin. The aldo-keto reductase AMT2 catalyzes the conversion of 2-keto-isovaleric acid (2-KIV) to 2-hydroxy-isovaleric acid (2-HIV), one of the precursor residues incorporated by AMT1 during AM-toxin biosynthesis, by reduction of its ketone to an alcohol. The cytochrome P450 monooxygenase AMT3 and the thioesterase AMT4 are also important for AM-toxin production, but their exact function within the AM-toxin biosynthesis are not known yet. Up to 21 proteins (including AMT1 to AMT4) are predicted to be involved in AM-toxin biosynthesis since their expression ishighly up-regulated in AM-toxin-producing cultures. The chain is Isopropyl malate synthase AMT7 from Alternaria alternata (Alternaria rot fungus).